Consider the following 75-residue polypeptide: Mitochondrial import receptor subunit TOM7-1 (75 aa).

Methionine 1 is subject to N-acetylmethionine. Residues 1–28 (MESTISLKVNKGKGKGSKGASSSDDKSK) form a disordered region. Topologically, residues 1 to 46 (MESTISLKVNKGKGKGSKGASSSDDKSKFDVVKEWTNWSLKKAKVV) are cytoplasmic. Residues 47–64 (THYGFIPLVIFVGMNSDP) traverse the membrane as a helical segment. The Mitochondrial intermembrane segment spans residues 65–75 (KPHLFQLLSPV).

Belongs to the Tom7 family. In terms of assembly, forms part of the preprotein translocase complex of the outer mitochondrial membrane (TOM complex) which consists of at least 6 different proteins (TOM5, TOM6, TOM7, TOM20, TOM22/TOM9 and TOM40). As to expression, expressed in roots, flowers, young cotyledons and leaves.

It is found in the mitochondrion outer membrane. Functionally, seems to act as a modulator of the dynamics of the mitochondrial protein transport machinery. Seems to promote the dissociation of subunits of the outer membrane translocase. The chain is Mitochondrial import receptor subunit TOM7-1 (TOM7-1) from Arabidopsis thaliana (Mouse-ear cress).